We begin with the raw amino-acid sequence, 176 residues long: Large ribosomal subunit protein uL6 (176 aa).

Residues 153 to 170 (PEPYKGKGIRYGDEEVRR) show a composition bias toward basic and acidic residues. A disordered region spans residues 153–176 (PEPYKGKGIRYGDEEVRRKEAKKK).

The protein belongs to the universal ribosomal protein uL6 family. As to quaternary structure, part of the 50S ribosomal subunit.

Functionally, this protein binds to the 23S rRNA, and is important in its secondary structure. It is located near the subunit interface in the base of the L7/L12 stalk, and near the tRNA binding site of the peptidyltransferase center. The sequence is that of Large ribosomal subunit protein uL6 from Chromohalobacter salexigens (strain ATCC BAA-138 / DSM 3043 / CIP 106854 / NCIMB 13768 / 1H11).